We begin with the raw amino-acid sequence, 190 residues long: Secretory phospholipase A2 (190 aa).

The first 15 residues, 1–15, serve as a signal peptide directing secretion; that stretch reads MKLAYFSSLLPLALA. A disulfide bridge connects residues Cys-62 and Cys-78. Ala-65 provides a ligand contact to Ca(2+). His-81 is a catalytic residue. Asp-82 is a Ca(2+) binding site.

This sequence belongs to the phospholipase A2 family. Requires Ca(2+) as cofactor.

It localises to the lipid droplet. The protein resides in the secreted. It catalyses the reaction a 1,2-diacyl-sn-glycero-3-phosphocholine + H2O = a 1-acyl-sn-glycero-3-phosphocholine + a fatty acid + H(+). Its function is as follows. Secretory phospholipase that catalyzes the calcium-dependent hydrolysis of the 2-acyl groups in 3-sn-phosphoglycerides. Increases the ability to utilize insect-derived nutrients and lipids, and promotes lipid dropplets accumulation. Plays a role in virulence, including more efficient penetration of the insect cuticle and evasion of host immune response by repressing the expression of host immunity genes. The chain is Secretory phospholipase A2 from Beauveria bassiana (strain ARSEF 2860) (White muscardine disease fungus).